The primary structure comprises 287 residues: Prohibitin-1 (287 aa).

Residues 102–116 (VLQLPAIYQNLGLDY) are interaction with ATG8. The AIM signature appears at 109 to 112 (YQNL). A coiled-coil region spans residues 180-224 (EFTKAVEQKQIAQQDAERAKFLVEKAEQERQASVIRAEGEAESAE). Positions 264 to 287 (SQHSGGGNSESSGSPNSLLLNIGR) are disordered. The segment covering 272–287 (SESSGSPNSLLLNIGR) has biased composition (low complexity).

Belongs to the prohibitin family. The mitochondrial prohibitin complex consists of two subunits (PHB1 and PHB2). The subunits assemble into a membrane-associated ring-shaped supercomplex of approximately 1 mDa. The mitochondrial prohibitin complex interacts with the m-AAA protease, a heterohexamer composed of YTA12/RCA1 and YTA10/AFG3. The mitochondrial prohibitin complex interacts with ATG8 and the interaction may support mitophagosome assembly. In terms of processing, the N-terminus is blocked.

It is found in the mitochondrion inner membrane. Its function is as follows. Prohibitin probably acts as a holdase/unfoldase for the stabilization of newly synthesized mitochondrial proteins. Involved in mitophagy; may act as an adapter for ATG8 that supports mitophagosome assembly. Negatively regulates the proteolytic processing of ATG32 via the i-AAA protease. Acts as a negative regulator of the m-AAA protease. This is Prohibitin-1 (PHB1) from Saccharomyces cerevisiae (strain ATCC 204508 / S288c) (Baker's yeast).